A 62-amino-acid polypeptide reads, in one-letter code: Cecropin-A (62 aa).

Residues 1-20 (MNLVKILFCVFACLVFTVTA) form the signal peptide. The propeptide at 21–24 (VPEP) is removed by a dipeptidylpeptidase. Thr-60 bears the Threonine amide mark.

Belongs to the cecropin family.

Its subcellular location is the secreted. Functionally, has antibacterial activity. The protein is Cecropin-A of Trichoplusia ni (Cabbage looper).